Here is a 107-residue protein sequence, read N- to C-terminus: Anti-adapter protein IraM (107 aa).

The protein belongs to the IraM/RssC family.

The protein localises to the cytoplasm. In terms of biological role, inhibits RpoS proteolysis by regulating RssB activity, thereby increasing the stability of the sigma stress factor RpoS during magnesium starvation. The polypeptide is Anti-adapter protein IraM (Shigella sonnei (strain Ss046)).